The following is a 194-amino-acid chain: Dephospho-CoA kinase (194 aa).

The DPCK domain maps to 4–194; sequence ALGLTGSIGM…HLVSKLTEGT (191 aa). 12 to 17 contributes to the ATP binding site; the sequence is GMGKST.

It belongs to the CoaE family.

It is found in the cytoplasm. It carries out the reaction 3'-dephospho-CoA + ATP = ADP + CoA + H(+). It participates in cofactor biosynthesis; coenzyme A biosynthesis; CoA from (R)-pantothenate: step 5/5. Functionally, catalyzes the phosphorylation of the 3'-hydroxyl group of dephosphocoenzyme A to form coenzyme A. The protein is Dephospho-CoA kinase of Jannaschia sp. (strain CCS1).